The following is a 436-amino-acid chain: tRNA(Ile)-lysidine synthase (436 aa).

An ATP-binding site is contributed by 27–32; the sequence is SGGVDS.

This sequence belongs to the tRNA(Ile)-lysidine synthase family.

The protein resides in the cytoplasm. The enzyme catalyses cytidine(34) in tRNA(Ile2) + L-lysine + ATP = lysidine(34) in tRNA(Ile2) + AMP + diphosphate + H(+). Ligates lysine onto the cytidine present at position 34 of the AUA codon-specific tRNA(Ile) that contains the anticodon CAU, in an ATP-dependent manner. Cytidine is converted to lysidine, thus changing the amino acid specificity of the tRNA from methionine to isoleucine. The chain is tRNA(Ile)-lysidine synthase from Vibrio vulnificus (strain YJ016).